The primary structure comprises 349 residues: Ribosomal RNA small subunit methyltransferase H 1 (349 aa).

S-adenosyl-L-methionine-binding positions include 79-81, Asp-99, Phe-129, Asp-148, and Gln-155; that span reads GGH.

The protein belongs to the methyltransferase superfamily. RsmH family.

It localises to the cytoplasm. It catalyses the reaction cytidine(1402) in 16S rRNA + S-adenosyl-L-methionine = N(4)-methylcytidine(1402) in 16S rRNA + S-adenosyl-L-homocysteine + H(+). Specifically methylates the N4 position of cytidine in position 1402 (C1402) of 16S rRNA. The protein is Ribosomal RNA small subunit methyltransferase H 1 of Agathobacter rectalis (strain ATCC 33656 / DSM 3377 / JCM 17463 / KCTC 5835 / VPI 0990) (Eubacterium rectale).